The following is a 594-amino-acid chain: Aspartate--tRNA ligase (594 aa).

Residue Glu-171 coordinates L-aspartate. The tract at residues 195 to 198 (QLFK) is aspartate. Arg-217 contributes to the L-aspartate binding site. Residues 217 to 219 (RDE) and Gln-226 contribute to the ATP site. His-449 contributes to the L-aspartate binding site. Glu-483 is a binding site for ATP. L-aspartate is bound at residue Arg-490. Position 535-538 (535-538 (GLDR)) interacts with ATP.

The protein belongs to the class-II aminoacyl-tRNA synthetase family. Type 1 subfamily. In terms of assembly, homodimer.

It localises to the cytoplasm. The enzyme catalyses tRNA(Asp) + L-aspartate + ATP = L-aspartyl-tRNA(Asp) + AMP + diphosphate. Its function is as follows. Catalyzes the attachment of L-aspartate to tRNA(Asp) in a two-step reaction: L-aspartate is first activated by ATP to form Asp-AMP and then transferred to the acceptor end of tRNA(Asp). This is Aspartate--tRNA ligase from Proteus mirabilis (strain HI4320).